We begin with the raw amino-acid sequence, 144 residues long: NADH dehydrogenase [ubiquinone] 1 alpha subcomplex subunit 13 (144 aa).

Alanine 2 is modified (N-acetylalanine). The chain crosses the membrane as a helical span at residues 30–51 (LSGYSMFAVGIGALIFGYWRMM).

The protein belongs to the complex I NDUFA13 subunit family. Complex I is composed of 45 different subunits. Interacts with CARD15, but not with CARD4. Interacts with STAT3, but not with STAT1, STAT2 and STAT5A. Interacts with OLFM4.

The protein localises to the mitochondrion inner membrane. It is found in the nucleus. Functionally, accessory subunit of the mitochondrial membrane respiratory chain NADH dehydrogenase (Complex I), that is believed not to be involved in catalysis. Complex I functions in the transfer of electrons from NADH to the respiratory chain. The immediate electron acceptor for the enzyme is believed to be ubiquinone. Involved in the interferon/all-trans-retinoic acid (IFN/RA) induced cell death. This apoptotic activity is inhibited by interaction with viral IRF1. Prevents the transactivation of STAT3 target genes. May play a role in CARD15-mediated innate mucosal responses and serve to regulate intestinal epithelial cell responses to microbes. The protein is NADH dehydrogenase [ubiquinone] 1 alpha subcomplex subunit 13 (Ndufa13) of Mus musculus (Mouse).